The following is a 107-amino-acid chain: MTEKKNRREKKNPREAKVTFEGLVTEALPNGMFRVRLENDTIILGYISGKIRSSSIRILMGDRVKIEVSRYDSSKGRIIYRLPHKDSKRIEDSKDSEDLKDITDSKD.

Residues Arg8–Pro83 form the S1-like domain.

Belongs to the IF-1 family. Component of the 30S ribosomal translation pre-initiation complex which assembles on the 30S ribosome in the order IF-2 and IF-3, IF-1 and N-formylmethionyl-tRNA(fMet); mRNA recruitment can occur at any time during PIC assembly.

Its subcellular location is the plastid. It is found in the chloroplast. One of the essential components for the initiation of protein synthesis. Stabilizes the binding of IF-2 and IF-3 on the 30S subunit to which N-formylmethionyl-tRNA(fMet) subsequently binds. Helps modulate mRNA selection, yielding the 30S pre-initiation complex (PIC). Upon addition of the 50S ribosomal subunit IF-1, IF-2 and IF-3 are released leaving the mature 70S translation initiation complex. The chain is Translation initiation factor IF-1, chloroplastic from Lolium perenne (Perennial ryegrass).